Reading from the N-terminus, the 425-residue chain is MRFWDIRRVENVSLNLQLENGKLEKPRYNKSTSKGFRVLKNGFWGIFEGNVADDEGLRQAEKNAFTQGDGDIEEIATKGRYRMRVKRDPQDMSIEEKVELLKDLEKIIRDVCVSTKLVYFENRRVLQYRDSCGSEVEYEVLRTGVSIMGVGKGRSLQFLSKRQMRVGGYEVLDGVDEKAYEIVEVLPKLVNALAPPSGEMSVVMDSSLAGVFVHEAFGHAVEADHVLQGATVLKGRLNEKVADESVTIIDDPTLPEFGFFPFDDEGVRAEKKVIVEDGVLKSFLHSRETAKKLGGVAGNARSQGVDVPIVRMSNTYIDTHHYSFDELLEECRDGVYLVGSRGGETNPATGYFHFNAQYGYLIKNGELAEMVRDVSLSGNTLEILRNVKIGREIEFDPGFCGKAGQLVPVSDGSPPVLCRATVGGA.

The protein belongs to the peptidase U62 family.

Probable metalloprotease. The protein is Metalloprotease AF_0655 of Archaeoglobus fulgidus (strain ATCC 49558 / DSM 4304 / JCM 9628 / NBRC 100126 / VC-16).